The chain runs to 352 residues: Cysteinyl leukotriene receptor 1 (352 aa).

The Extracellular segment spans residues 1–43; the sequence is MYLQGTKQTFLENMNGTENLTTSLINNTCHDTIDEFRNQVYST. N-linked (GlcNAc...) asparagine glycans are attached at residues asparagine 15, asparagine 19, and asparagine 26. The chain crosses the membrane as a helical span at residues 44-64; that stretch reads MYSVISVVGFFGNSFVLYVLI. Residues 65–72 are Cytoplasmic-facing; the sequence is KTYHEKSA. Residues 73 to 93 form a helical membrane-spanning segment; that stretch reads FQVYMINLAIADLLCVCTLPL. Residues 94–121 are Extracellular-facing; sequence RVVYYVHKGKWLFGDFLCRLTTYALYVN. Cysteine 111 and cysteine 188 are disulfide-bonded. Residues 122-142 form a helical membrane-spanning segment; the sequence is LYCSIFFMTAMSFFRCVAIVF. Topologically, residues 143-156 are cytoplasmic; it reads PVQNINLVTQKKAR. The helical transmembrane segment at 157–177 threads the bilayer; that stretch reads FVCIGIWIFVILTSSPFLMYK. Residues 178 to 208 lie on the Extracellular side of the membrane; it reads SYQDEKNNTKCFEPPQNNQAKKYVLILHYVS. N-linked (GlcNAc...) asparagine glycosylation occurs at asparagine 184. The chain crosses the membrane as a helical span at residues 209–229; the sequence is LFFGFIIPFVTIIVCYTMIIL. At 230-245 the chain is on the cytoplasmic side; sequence TLLKNTMKKNMPSRRK. The helical transmembrane segment at 246 to 266 threads the bilayer; that stretch reads AIGMIIVVTAAFLVSFMPYHI. At 267-291 the chain is on the extracellular side; sequence QRTIHLHLLHSETRPCDSVLRMQKS. The chain crosses the membrane as a helical span at residues 292–312; the sequence is VVITLSLAASNCCFDPLLYFF. Residues 313-352 are Cytoplasmic-facing; that stretch reads SGGNFRRRLSTFRKHSLSSMTYVPKKKASLPEKGEEICNE.

Belongs to the G-protein coupled receptor 1 family. Widely expressed, with higher expression in the lung and skin, intermediate levels in the heart, kidney and stomach and lower levels in several other tissues. Isoform 1 is the most abundant form in all tested tissues.

It is found in the cell membrane. Functionally, receptor for cysteinyl leukotrienes mediating constriction of the microvascular smooth muscle during an inflammatory response. This response is mediated via a G-protein that activates a phosphatidylinositol-calcium second messenger system. The rank order of affinities for the leukotrienes is LTD4 &gt;&gt; LTE4 = LTC4 &gt;&gt; LTB4. The polypeptide is Cysteinyl leukotriene receptor 1 (Cysltr1) (Mus musculus (Mouse)).